The primary structure comprises 814 residues: Kinesin-like protein KIF6 (814 aa).

The Kinesin motor domain maps to 5 to 345; sequence TIQIFARVKP…CRFAQRVALI (341 aa). Residue 97-104 participates in ATP binding; that stretch reads GQTGSGKT. Coiled-coil stretches lie at residues 356 to 385, 456 to 494, and 588 to 683; these read NPRL…QRTE, LKEE…EALH, and EAKA…KEFE. The tract at residues 752–788 is disordered; that stretch reads LPSPCPSPHSQKQSSTSTPLEDSIPKRPVSSIPLTGD. The span at 759–771 shows a compositional bias: polar residues; it reads PHSQKQSSTSTPL.

This sequence belongs to the TRAFAC class myosin-kinesin ATPase superfamily. Kinesin family.

It is found in the cytoplasm. Its subcellular location is the cytoskeleton. The protein is Kinesin-like protein KIF6 (KIF6) of Homo sapiens (Human).